A 68-amino-acid chain; its full sequence is Sperm-associated antigen 11A (68 aa).

A signal peptide spans 1–19 (MKVLLLFAVFFCLVQRNSG). Cystine bridges form between Cys-30/Cys-59, Cys-37/Cys-52, and Cys-42/Cys-60.

Belongs to the beta-defensin family. Only expressed in epididymis (middle part of the caput).

Its subcellular location is the secreted. Has antimicrobial activity against E.coli. Plays a role in the defense response in the male reproductive tract, contributing to sperm maturation, storage and protection. This is Sperm-associated antigen 11A from Rattus norvegicus (Rat).